The sequence spans 293 residues: MNPFWSMSTNAGRKRSDGEEQSGSGEQRASPARPPFGKKQLPSIPKNAVPITKAASPASSTQSANGTHASYGPFYLEYSLLAEFTLVIKQKLPGIYVQPSYRSALMWFGVIFIRHGLYQDGVFKFTVYIPDNYPDGDCPKVVFDTPVFHPLVDPVSGELDVRRAFTKWRRNHNHIWQVLMYARTIFYKINTMEPLNPEAAVLYDKDIQLFKSKVVDSVKLCNSHLFDQPKIDDPYAISFSPWNPAVHEEAKEKMFAHKRRPEDFNKGLPVSGLSWVKPGSTQPFSKEDNPLQT.

Polar residues predominate over residues 1–11 (MNPFWSMSTNA). The tract at residues 1–44 (MNPFWSMSTNAGRKRSDGEEQSGSGEQRASPARPPFGKKQLPSI) is disordered. In terms of domain architecture, UBC core spans 75–223 (YLEYSLLAEF…VVDSVKLCNS (149 aa)). A disordered region spans residues 260–293 (RPEDFNKGLPVSGLSWVKPGSTQPFSKEDNPLQT).

Belongs to the ubiquitin-conjugating enzyme family. FTS subfamily.

The protein resides in the cytoplasm. The protein localises to the cell membrane. Its function is as follows. May function to promote vesicle trafficking and/or fusion. May also regulate apoptosis. The chain is AKT-interacting protein (aktip) from Danio rerio (Zebrafish).